A 309-amino-acid polypeptide reads, in one-letter code: Probable nitrogen assimilation transcriptional activator (309 aa).

The HTH lysR-type domain maps to 1-57 (MRLEQLQAFLKVAELGSFQQAALQSEVTQSTISRQIQGLESALKCQLFHRGAQAKLT). A DNA-binding region (H-T-H motif) is located at residues 18–38 (FQQAALQSEVTQSTISRQIQG).

The protein belongs to the LysR transcriptional regulatory family.

Seems to regulate utilization of fixed nitrogen by controlling the expression of a certain gene(s) involved in nitrogen metabolism. In Synechocystis sp. (strain ATCC 27184 / PCC 6803 / Kazusa), this protein is Probable nitrogen assimilation transcriptional activator (ntcB).